The following is a 1484-amino-acid chain: Cystic fibrosis transmembrane conductance regulator (1484 aa).

The Cytoplasmic portion of the chain corresponds to 1–77 (MQRSPLEKAS…KLINALRRCF (77 aa)). The helical transmembrane segment at 78 to 98 (FWRFMFYGIILYLGEVTKSVQ) threads the bilayer. The ABC transmembrane type-1 1 domain occupies 81–365 (FMFYGIILYL…WAVQTWYDSL (285 aa)). Over 99 to 122 (PLLLGRIIASYDPDNKEERSIAIY) the chain is Extracellular. Residues 123 to 146 (LGIGLCLLFVMRTLLLHPAIFGLH) traverse the membrane as a helical segment. Topologically, residues 147 to 195 (RIGMQMRIAMFSLIYKKTLKLSSRVLDKISIGQLVSLLSNNLNKFDEGL) are cytoplasmic. A helical membrane pass occupies residues 196-216 (ALAHFVWIAPLQVTLLMGLLW). The Extracellular segment spans residues 217–222 (DLLQAS). The helical transmembrane segment at 223–243 (AFCGLAFLIVLALFQAGLGRM) threads the bilayer. Residues 244-298 (MMKYRDQRAGKINERLVITSEMIENIQSVKAYCWEEAMEKMIESIRQTELKLTRK) lie on the Cytoplasmic side of the membrane. The helical transmembrane segment at 299–319 (AAYVRYFNSSAFFFSGFFVVF) threads the bilayer. Residues 320–339 (LSVLPYALIKTIVLRKIFTT) are Extracellular-facing. Residues 340–358 (ISFCIVLRMAVTRQFPWAV) traverse the membrane as a helical segment. The Cytoplasmic portion of the chain corresponds to 359-860 (QTWYDSLGAI…YLRYVTIHKS (502 aa)). Residues W401, S434, 458-465 (GSTGAGKT), and Q493 contribute to the ATP site. The ABC transporter 1 domain maps to 423 to 646 (NADNSLFFSN…RPDFSSKLMG (224 aa)). C524 carries S-palmitoyl cysteine lipidation. Phosphoserine occurs at positions 549 and 660. The segment at 654–833 (SAERRNSIIT…EEINEEDLKE (180 aa)) is disordered R region. Phosphoserine; by PKA is present on S670. S686 is subject to Phosphoserine. Residue K688 forms a Glycyl lysine isopeptide (Lys-Gly) (interchain with G-Cter in ubiquitin) linkage. Phosphoserine is present on residues S700 and S712. Residue T717 is modified to Phosphothreonine. A phosphoserine mark is found at S737, S769, S792, S797, and S815. Residues 861–881 (LVFVLIWCLVIFLAEVAISLV) form a helical membrane-spanning segment. Positions 861 to 1157 (LVFVLIWCLV…AVNSSIDVDS (297 aa)) constitute an ABC transmembrane type-1 2 domain. The Extracellular segment spans residues 882 to 920 (VLWLLKKTASQDKGNSTQSINSSYTVIFTSTSTYYVFYI). N896 and N902 each carry an N-linked (GlcNAc...) asparagine glycan. A discontinuously helical membrane pass occupies residues 921-941 (YVGVADTLLALGFFRGLPLVH). Residues 942–992 (TLITVSKILHHKMLHAVLQAPMSTLNALKAGGILNRFSKDIAILDDLLPLT) lie on the Cytoplasmic side of the membrane. A helical transmembrane segment spans residues 993-1013 (IFDFVQLLLIVIGAVTVVSAL). Over 1014-1015 (QP) the chain is Extracellular. Residues 1016-1036 (YIFLATVPVIAAFIMLRAYFL) form a helical membrane-spanning segment. Topologically, residues 1037-1097 (HTSQQLKQLE…TANWFLYLST (61 aa)) are cytoplasmic. The helical transmembrane segment at 1098 to 1118 (LRWFQMRMEIIFVIFFIAITF) threads the bilayer. Over 1119 to 1132 (ISILTTGEGVGAVG) the chain is Extracellular. Residues 1133–1153 (IILTLAMNIMGTLQWAVNSSI) traverse the membrane as a helical segment. At 1154 to 1484 (DVDSLMRSVS…TEEEVQETRL (331 aa)) the chain is on the cytoplasmic side. The ABC transporter 2 domain maps to 1214–1447 (MTVKDLTAKY…KSLFRQAISP (234 aa)). ATP contacts are provided by residues Y1223 and 1248 to 1255 (GRTGSGKS). An interaction with GORASP2 region spans residues 1390–1484 (RTLKQAFADC…TEEEVQETRL (95 aa)). A lipid anchor (S-palmitoyl cysteine) is attached at C1399. Phosphoserine occurs at positions 1448 and 1460. Over residues 1456-1465 (HRNSSKHKSR) the composition is skewed to basic residues. The segment at 1456–1484 (HRNSSKHKSRSQIAALKEETEEEVQETRL) is disordered. The segment covering 1474-1484 (ETEEEVQETRL) has biased composition (acidic residues). The PDZ-binding motif lies at 1482 to 1484 (TRL).

It belongs to the ABC transporter superfamily. ABCC family. CFTR transporter (TC 3.A.1.202) subfamily. In terms of assembly, monomer; does not require oligomerization for channel activity. May form oligomers in the membrane. Interacts with SLC26A3, SLC26A6 and NHERF1. Interacts with SHANK2. Interacts with MYO6. Interacts (via C-terminus) with GOPC (via PDZ domain); this promotes CFTR internalization and thereby decreases channel activity. Interacts with SLC4A7 through NHERF1. Found in a complex with MYO5B and RAB11A. Interacts with ANO1. Interacts with SLC26A8. Interacts with AHCYL1; the interaction increases CFTR activity. Interacts with CSE1L. The core-glycosylated form interacts with GORASP2 (via PDZ GRASP-type 1 domain) in respone to ER stress. Interacts with MARCHF2; the interaction leads to CFTR ubiqtuitination and degradation. Interacts with ADGRG2. Post-translationally, N-glycosylated. In terms of processing, phosphorylated; cAMP treatment promotes phosphorylation and activates the channel. Dephosphorylation decreases the ATPase activity (in vitro). Phosphorylation at PKA sites activates the channel. Phosphorylation at PKC sites enhances the response to phosphorylation by PKA. Phosphorylated by AMPK; this inhibits channel activity. Ubiquitinated, leading to its degradation in the lysosome. Deubiquitination by USP10 in early endosomes enhances its endocytic recycling to the cell membrane. Ubiquitinated by RNF185 during ER stress. Ubiquitinated by MARCHF2.

It is found in the apical cell membrane. It localises to the early endosome membrane. The protein resides in the cell membrane. Its subcellular location is the recycling endosome membrane. The protein localises to the endoplasmic reticulum membrane. It is found in the nucleus. The catalysed reaction is ATP + H2O + closed Cl(-) channel = ADP + phosphate + open Cl(-) channel.. It catalyses the reaction chloride(in) = chloride(out). The enzyme catalyses hydrogencarbonate(in) = hydrogencarbonate(out). It carries out the reaction ATP + H2O = ADP + phosphate + H(+). In terms of biological role, epithelial ion channel that plays an important role in the regulation of epithelial ion and water transport and fluid homeostasis. Mediates the transport of chloride ions across the cell membrane. Possesses an intrinsic ATPase activity and utilizes ATP to gate its channel; the passive flow of anions through the channel is gated by cycles of ATP binding and hydrolysis by the ATP-binding domains. The ion channel is also permeable to HCO(3)(-); selectivity depends on the extracellular chloride concentration. Exerts its function also by modulating the activity of other ion channels and transporters. Contributes to the regulation of the pH and the ion content of the epithelial fluid layer. Modulates the activity of the epithelial sodium channel (ENaC) complex, in part by regulating the cell surface expression of the ENaC complex. May regulate bicarbonate secretion and salvage in epithelial cells by regulating the transporter SLC4A7. Can inhibit the chloride channel activity of ANO1. Plays a role in the chloride and bicarbonate homeostasis during sperm epididymal maturation and capacitation. The chain is Cystic fibrosis transmembrane conductance regulator from Mustela putorius furo (European domestic ferret).